Here is a 242-residue protein sequence, read N- to C-terminus: Uridylate kinase (242 aa).

Residue 13-16 coordinates ATP; the sequence is KLSG. UMP is bound at residue Gly-55. ATP-binding residues include Gly-56 and Arg-60. UMP contacts are provided by residues Asp-75 and 136-143; that span reads TGNPFFTT. ATP contacts are provided by Thr-163, Tyr-169, and Asp-172.

The protein belongs to the UMP kinase family. As to quaternary structure, homohexamer.

Its subcellular location is the cytoplasm. It catalyses the reaction UMP + ATP = UDP + ADP. Its pathway is pyrimidine metabolism; CTP biosynthesis via de novo pathway; UDP from UMP (UMPK route): step 1/1. Its activity is regulated as follows. Inhibited by UTP. In terms of biological role, catalyzes the reversible phosphorylation of UMP to UDP. In Zymomonas mobilis subsp. mobilis (strain ATCC 31821 / ZM4 / CP4), this protein is Uridylate kinase.